The primary structure comprises 593 residues: Chromodomain Y-like protein (593 aa).

Over residues 1–14 the composition is skewed to polar residues; it reads MGIGNSQPNSQEAQ. The interval 1 to 30 is disordered; the sequence is MGIGNSQPNSQEAQLCTLPEKAEQPTDDNT. The Chromo domain maps to 56-116; sequence TQVESIVDKR…RHNERQKEGS (61 aa). The interval 56–304 is interaction with EZH2; that stretch reads TQVESIVDKR…TIQTSVTGVT (249 aa). Ser-83 carries the post-translational modification Phosphoserine. The disordered stretch occupies residues 110-158; the sequence is ERQKEGSLARASRASPSNARKQISRSTHSTLSKTNSKALVVGKDHESKS. Residues 117-129 are compositionally biased toward low complexity; the sequence is LARASRASPSNAR. N6,N6,N6-trimethyllysine; by EHMT2; alternate is present on Lys-130. N6,N6-dimethyllysine; by EHMT2; alternate is present on Lys-130. N6-methyllysine; by EHMT2; alternate is present on Lys-130. Residues 133 to 146 show a composition bias toward polar residues; that stretch reads SRSTHSTLSKTNSK. Phosphoserine is present on residues Ser-165, Ser-196, and Ser-211. Residues 200–223 form a disordered region; that stretch reads GRTSVDGFQGESPEKLDPVDQGAE. The interval 357-589 is acetyl-CoA-binding domain; sequence SENNSLNPEV…DSMLKYLQRK (233 aa).

Forms multimers and multimerization is required for stable binding to chromatin. Interacts with HDAC1 and HDAC2 via its C-terminal acetyl-CoA-binding domain. Interacts with EZH2, EED, SUZ12, REST, EHMT1 and EHMT2. Part of a complex containing at least CDYL, REST, WIZ, SETB1, EHMT1 and EHMT2. Part of a complex containing at least CDYL, MIER1, MIER2, HDAC1 and HDAC2. Interacts with CHAF1A and CHAF1B; bridging the CAF-1 complex to the MCM2-7 (MCM) complex. Interacts with MCM3 and MCM5; bridging the CAF-1 complex to the MCM2-7 (MCM) complex. Interacts with EHMT2 and PRDM9; interaction only takes place when PRDM9 is bound to hotspot DNA. Highly expressed in testis (at protein level). Expressed in the hippocampus (at protein level). Expressed in the medial prefrontal cortex, prelimbic cortex, intralimbic cortex and cingulate cortex area (at protein level). Isoform 1: Expressed as 2 transcripts encoding the same protein, a ubiquitous transcript and a highly expressed testis-specific transcript.

It is found in the nucleus. Its subcellular location is the chromosome. The catalysed reaction is L-lysyl-[protein] + acetyl-CoA = N(6)-acetyl-L-lysyl-[protein] + CoA + H(+). It catalyses the reaction 3-hydroxybutanoyl-CoA = (2E)-butenoyl-CoA + H2O. In terms of biological role, chromatin reader protein that recognizes and binds histone H3 trimethylated at 'Lys-9', dimethylated at 'Lys-27' and trimethylated at 'Lys-27' (H3K9me3, H3K27me2 and H3K27me3, respectively). Part of multimeric repressive chromatin complexes, where it is required for transmission and restoration of repressive histone marks, thereby preserving the epigenetic landscape. Required for chromatin targeting and maximal enzymatic activity of Polycomb repressive complex 2 (PRC2); acts as a positive regulator of PRC2 activity by bridging the pre-existing histone H3K27me3 and newly recruited PRC2 on neighboring nucleosomes. Acts as a corepressor for REST by facilitating histone-lysine N-methyltransferase EHMT2 recruitment and H3K9 dimethylation at REST target genes for repression. Involved in X chromosome inactivation in females: recruited to Xist RNA-coated X chromosome and facilitates propagation of H3K9me2 by anchoring EHMT2. Promotes EZH2 accumulation and H3K27me3 methylation at DNA double strand breaks (DSBs), thereby facilitating transcriptional repression at sites of DNA damage and homology-directed repair of DSBs. Required for neuronal migration during brain development by repressing expression of RHOA. By repressing the expression of SCN8A, contributes to the inhibition of intrinsic neuronal excitability and epileptogenesis. In addition to acting as a chromatin reader, acts as a hydro-lyase. Shows crotonyl-coA hydratase activity by mediating the conversion of crotonyl-CoA ((2E)-butenoyl-CoA) to beta-hydroxybutyryl-CoA (3-hydroxybutanoyl-CoA), thereby acting as a negative regulator of histone crotonylation. Histone crotonylation is required during spermatogenesis; down-regulation of histone crotonylation by CDYL regulates the reactivation of sex chromosome-linked genes in round spermatids and histone replacement in elongating spermatids. By regulating histone crotonylation and trimethylation of H3K27, may be involved in stress-induced depression-like behaviors, possibly by regulating VGF expression. May have histone acetyltransferase activity; such activity is however unsure in vivo. Functionally, not able to recognize and bind histone H3K9me3, histone H3K27me2 and histone H3K27me3, due to the presence of a N-terminal extension that inactivates the chromo domain. The sequence is that of Chromodomain Y-like protein from Mus musculus (Mouse).